We begin with the raw amino-acid sequence, 65 residues long: Large ribosomal subunit protein bL35 (65 aa).

It belongs to the bacterial ribosomal protein bL35 family.

The polypeptide is Large ribosomal subunit protein bL35 (Prochlorococcus marinus (strain MIT 9215)).